Here is a 313-residue protein sequence, read N- to C-terminus: Olfactory receptor 1M1 (313 aa).

The Extracellular portion of the chain corresponds to 1 to 25; sequence MEPRNQTSASQFILLGLSEKPEQET. N-linked (GlcNAc...) asparagine glycosylation is present at Asn-5. Residues 26–49 form a helical membrane-spanning segment; that stretch reads LLFSLFFCMYLVMVVGNLLIILAI. Topologically, residues 50–57 are cytoplasmic; the sequence is SIDSHLHT. A helical membrane pass occupies residues 58–79; that stretch reads PMYFFLANLSLVDFCLATNTIP. Topologically, residues 80–100 are extracellular; the sequence is KMLVSLQTGSKAISYPCCLIQ. A disulfide bridge links Cys-97 with Cys-189. The helical transmembrane segment at 101–120 threads the bilayer; that stretch reads MYFFHFFGIVDSVIIAMMAY. Residues 121-139 lie on the Cytoplasmic side of the membrane; that stretch reads DRFVAICHPLHYAKIMSLR. Residues 140–158 form a helical membrane-spanning segment; it reads LCRLLVGALWAFSCFISLT. The Extracellular segment spans residues 159-196; that stretch reads HILLMARLVFCGSHEVPHYFCDLTPILRLSCTDTSVNR. Residues 197-219 traverse the membrane as a helical segment; that stretch reads IFILIVAGMVIATPFVCILASYA. The Cytoplasmic portion of the chain corresponds to 220–236; it reads RILVAIMKVPSAGGRKK. Residues 237–259 form a helical membrane-spanning segment; that stretch reads AFSTCSSHLSVVALFYGTTIGVY. Topologically, residues 260 to 272 are extracellular; sequence LCPSSVLTTVKEK. Residues 273-292 form a helical membrane-spanning segment; that stretch reads ASAVMYTAVTPMLNPFIYSL. The Cytoplasmic segment spans residues 293–313; it reads RNRDLKGALRKLVNRKITSSS.

This sequence belongs to the G-protein coupled receptor 1 family.

Its subcellular location is the cell membrane. In terms of biological role, odorant receptor. The sequence is that of Olfactory receptor 1M1 from Homo sapiens (Human).